A 376-amino-acid chain; its full sequence is Mitochondrial distribution and morphology protein 34 (376 aa).

The SMP-LTD domain occupies 1 to 194 (MSFTFNWPRF…LPGIIHRLSQ (194 aa)). 2 disordered regions span residues 207-249 (SKHP…PKIV) and 286-376 (SVPP…LHPS). Residues 218 to 230 (EISEPGDYGEEGE) are compositionally biased toward acidic residues. A compositionally biased stretch (basic residues) spans 306–318 (VKAKRKRTYRLGG). Residues 350 to 362 (MDRYFRSYDDHSR) are compositionally biased toward basic and acidic residues.

It belongs to the MDM34 family. Component of the ER-mitochondria encounter structure (ERMES) or MDM complex, composed of MMM1, MDM10, MDM12 and MDM34.

It is found in the mitochondrion outer membrane. Functionally, component of the ERMES/MDM complex, which serves as a molecular tether to connect the endoplasmic reticulum (ER) and mitochondria. Components of this complex are involved in the control of mitochondrial shape and protein biogenesis, and function in nonvesicular lipid trafficking between the ER and mitochondria. MDM34 is required for the interaction of the ER-resident membrane protein MMM1 and the outer mitochondrial membrane-resident beta-barrel protein MDM10. The chain is Mitochondrial distribution and morphology protein 34 from Laccaria bicolor (strain S238N-H82 / ATCC MYA-4686) (Bicoloured deceiver).